The chain runs to 898 residues: Transportin-1 (898 aa).

Met1 is modified (N-acetylmethionine). 20 HEAT repeats span residues Gly19–Glu46, Tyr51–Gln89, Phe98–Leu131, Leu137–Asp174, Asn181–Ile211, Phe224–Leu251, His263–Thr290, Pro306–Val397, His405–Ala433, Pro445–Arg472, Leu486–Ala519, Leu527–Val560, Glu568–Gln606, Glu614–Gly665, Ile676–Phe707, Ala715–Gly748, Pro756–Pro791, Gln799–Asn832, Ile841–Val872, and Glu875–Phe895. An Importin N-terminal domain is found at Val41–Asp109. The tract at residues Phe347–Asp374 is disordered. A compositionally biased stretch (acidic residues) spans Asp360 to Asp374.

The protein belongs to the importin beta family. Importin beta-2 subfamily. Identified in a complex that contains TNPO1, RAN and RANBP1. Binds HNRPA1, HNRPA2, HNRNPDL, RPS7, RPL5 and RAN. Interacts with H2A, H2B, H3 and H4 histones. Interacts with isoform 1 and isoform 5 of ADAR/ADAR1 (via DRBM 3 domain). Interacts with SNAI1 (via zinc fingers); the interaction mediates SNAI1 nuclear import. Interacts with SNAI2 (via zinc fingers). Interacts with RPL23A (via BIB domain) and SRP19; this interaction is involved in RPL23A and SRP19 import into the nucleus. Interacts (via HEAT repeats 8-12) with BAP1 (via non-classical PY-NLS); this interaction is direct, is involved in BAP1 nuclear import and disrupts BAP1 homodimerization. As to quaternary structure, (Microbial infection) Binds to HIV-1 Rev.

The protein resides in the cytoplasm. It localises to the nucleus. Functionally, functions in nuclear protein import as nuclear transport receptor. Serves as receptor for nuclear localization signals (NLS) in cargo substrates. May mediate docking of the importin/substrate complex to the nuclear pore complex (NPC) through binding to nucleoporin and the complex is subsequently translocated through the pore by an energy requiring, Ran-dependent mechanism. At the nucleoplasmic side of the NPC, Ran binds to the importin, the importin/substrate complex dissociates and importin is re-exported from the nucleus to the cytoplasm where GTP hydrolysis releases Ran. The directionality of nuclear import is thought to be conferred by an asymmetric distribution of the GTP- and GDP-bound forms of Ran between the cytoplasm and nucleus. Involved in nuclear import of M9-containing proteins. In vitro, binds directly to the M9 region of the heterogeneous nuclear ribonucleoproteins (hnRNP), A1 and A2 and mediates their nuclear import. Involved in hnRNP A1/A2 nuclear export. Mediates the nuclear import of ribosomal proteins RPL23A, RPS7 and RPL5. In vitro, mediates nuclear import of H2A, H2B, H3 and H4 histones. In vitro, mediates nuclear import of SRP19. Mediates nuclear import of ADAR/ADAR1 isoform 1 and isoform 5 in a RanGTP-dependent manner. Main mediator of PR-DUB complex component BAP1 nuclear import; acts redundantly with the karyopherins KPNA1 and KPNA2. Its function is as follows. (Microbial infection) In case of HIV-1 infection, binds and mediates the nuclear import of HIV-1 Rev. This is Transportin-1 (TNPO1) from Homo sapiens (Human).